The chain runs to 58 residues: Small ribosomal subunit protein bS21 (58 aa).

A compositionally biased stretch (basic and acidic residues) spans 32 to 42 (VRKREHYEKPS). A disordered region spans residues 32–58 (VRKREHYEKPSVKKKKKSEAARKRKFK). The span at 43–58 (VKKKKKSEAARKRKFK) shows a compositional bias: basic residues.

The protein belongs to the bacterial ribosomal protein bS21 family.

The protein is Small ribosomal subunit protein bS21 of Clostridium botulinum (strain Okra / Type B1).